We begin with the raw amino-acid sequence, 602 residues long: Isocyanide synthase A (602 aa).

Belongs to the isocyanide synthase family.

In terms of biological role, isocyanide synthase involved in the biosynthesis of isocyanides (or isonitriles), a class of microbial secondary metabolites. The presence of an isonitrile moiety within a compound imparts unique biological (cytotoxic, antibacterial, and antiprotozoal) and chemical (transition metal coordination) properties and enables synthetic and biochemical applications. This Aspergillus fumigatus (strain ATCC MYA-4609 / CBS 101355 / FGSC A1100 / Af293) (Neosartorya fumigata) protein is Isocyanide synthase A.